We begin with the raw amino-acid sequence, 376 residues long: Queuine tRNA-ribosyltransferase (376 aa).

Aspartate 92 functions as the Proton acceptor in the catalytic mechanism. Substrate contacts are provided by residues 92–96, aspartate 146, glutamine 190, and glycine 217; that span reads DSGGF. The interval 248 to 254 is RNA binding; it reads GVGRPED. The active-site Nucleophile is aspartate 267. An RNA binding; important for wobble base 34 recognition region spans residues 272-276; the sequence is TRNAR. 4 residues coordinate Zn(2+): cysteine 305, cysteine 307, cysteine 310, and histidine 337.

It belongs to the queuine tRNA-ribosyltransferase family. Homodimer. Within each dimer, one monomer is responsible for RNA recognition and catalysis, while the other monomer binds to the replacement base PreQ1. It depends on Zn(2+) as a cofactor.

It catalyses the reaction 7-aminomethyl-7-carbaguanine + guanosine(34) in tRNA = 7-aminomethyl-7-carbaguanosine(34) in tRNA + guanine. It functions in the pathway tRNA modification; tRNA-queuosine biosynthesis. Its function is as follows. Catalyzes the base-exchange of a guanine (G) residue with the queuine precursor 7-aminomethyl-7-deazaguanine (PreQ1) at position 34 (anticodon wobble position) in tRNAs with GU(N) anticodons (tRNA-Asp, -Asn, -His and -Tyr). Catalysis occurs through a double-displacement mechanism. The nucleophile active site attacks the C1' of nucleotide 34 to detach the guanine base from the RNA, forming a covalent enzyme-RNA intermediate. The proton acceptor active site deprotonates the incoming PreQ1, allowing a nucleophilic attack on the C1' of the ribose to form the product. After dissociation, two additional enzymatic reactions on the tRNA convert PreQ1 to queuine (Q), resulting in the hypermodified nucleoside queuosine (7-(((4,5-cis-dihydroxy-2-cyclopenten-1-yl)amino)methyl)-7-deazaguanosine). This chain is Queuine tRNA-ribosyltransferase, found in Stenotrophomonas maltophilia (strain K279a).